Consider the following 308-residue polypeptide: Beta-1,3-galactosyltransferase 5 (308 aa).

Residues methionine 1–arginine 7 lie on the Cytoplasmic side of the membrane. The chain crosses the membrane as a helical; Signal-anchor for type II membrane protein span at residues leucine 8–methionine 25. Residues aspartate 26–valine 308 lie on the Lumenal side of the membrane. Asparagine 128, asparagine 172, and asparagine 229 each carry an N-linked (GlcNAc...) asparagine glycan.

This sequence belongs to the glycosyltransferase 31 family. In terms of tissue distribution, expressed in brain and kidney.

The protein resides in the golgi apparatus membrane. The enzyme catalyses a globoside Gb4Cer (d18:1(4E)) + UDP-alpha-D-galactose = a globoside GalGb4Cer (d18:1(4E)) + UDP + H(+). Its pathway is protein modification; protein glycosylation. Functionally, catalyzes the transfer of Gal to GlcNAc-based acceptors with a preference for the core3 O-linked glycan GlcNAc(beta1,3)GalNAc structure. Can use glycolipid LC3Cer as an efficient acceptor. Also catalyzes the transfer of Gal to the terminal GalNAc unit of the globoside GB4, thereby synthesizing the glycolipid GB5, also known as the stage-specific embryonic antigen-3 (SSEA-3). The protein is Beta-1,3-galactosyltransferase 5 of Mus musculus (Mouse).